A 276-amino-acid polypeptide reads, in one-letter code: HTH-type transcriptional activator RhaR (276 aa).

The HTH araC/xylS-type domain occupies E174–R272. DNA-binding regions (H-T-H motif) lie at residues A191–T212 and V239–F262.

Binds DNA as a dimer.

It localises to the cytoplasm. Its function is as follows. Activates expression of the rhaSR operon in response to L-rhamnose. This Mannheimia succiniciproducens (strain KCTC 0769BP / MBEL55E) protein is HTH-type transcriptional activator RhaR.